A 683-amino-acid chain; its full sequence is DNA-directed RNA polymerase subunit beta' (683 aa).

Positions 69, 71, 87, and 90 each coordinate Zn(2+). The Mg(2+) site is built by Asp489, Asp491, and Asp493.

The protein belongs to the RNA polymerase beta' chain family. RpoC1 subfamily. In plastids the minimal PEP RNA polymerase catalytic core is composed of four subunits: alpha, beta, beta', and beta''. When a (nuclear-encoded) sigma factor is associated with the core the holoenzyme is formed, which can initiate transcription. The cofactor is Mg(2+). Zn(2+) is required as a cofactor.

It localises to the plastid. Its subcellular location is the chloroplast. It catalyses the reaction RNA(n) + a ribonucleoside 5'-triphosphate = RNA(n+1) + diphosphate. Its function is as follows. DNA-dependent RNA polymerase catalyzes the transcription of DNA into RNA using the four ribonucleoside triphosphates as substrates. This is DNA-directed RNA polymerase subunit beta' from Saccharum hybrid (Sugarcane).